A 430-amino-acid polypeptide reads, in one-letter code: Protein trichome birefringence-like 24 (430 aa).

A helical; Signal-anchor for type II membrane protein membrane pass occupies residues 15–35 (VLLIKLISAILISFFAFRLFI). The GDS motif signature appears at 153–155 (GDS). The DCXHWCLPGXXDXWN motif signature appears at 406-420 (DCLHWCLPGPFDYLN).

Belongs to the PC-esterase family. TBL subfamily.

The protein localises to the membrane. Its function is as follows. May act as a bridging protein that binds pectin and other cell wall polysaccharides. Probably involved in maintaining esterification of pectins. May be involved in the specific O-acetylation of cell wall polymers. This chain is Protein trichome birefringence-like 24 (TBL24), found in Arabidopsis thaliana (Mouse-ear cress).